The sequence spans 270 residues: Cell division protein DivIB (270 aa).

The Cytoplasmic portion of the chain corresponds to Met1–His28. A helical membrane pass occupies residues Leu29–Pro49. The Extracellular segment spans residues Leu50 to Glu270. In terms of domain architecture, POTRA spans Ser51–Phe119.

Belongs to the FtsQ/DivIB family. DivIB subfamily.

The protein localises to the cell membrane. Its function is as follows. Cell division protein that may be involved in stabilizing or promoting the assembly of the division complex. This chain is Cell division protein DivIB, found in Listeria monocytogenes serovar 1/2a (strain ATCC BAA-679 / EGD-e).